Reading from the N-terminus, the 92-residue chain is Small ribosomal subunit protein bS18 (92 aa).

This sequence belongs to the bacterial ribosomal protein bS18 family. In terms of assembly, part of the 30S ribosomal subunit. Forms a tight heterodimer with protein bS6.

Its function is as follows. Binds as a heterodimer with protein bS6 to the central domain of the 16S rRNA, where it helps stabilize the platform of the 30S subunit. This chain is Small ribosomal subunit protein bS18, found in Chlorobium chlorochromatii (strain CaD3).